Here is a 559-residue protein sequence, read N- to C-terminus: MAAEEMQWPVPMKAIGAQNLLTMPGGVAKAGYLHKKGGTQLQLLKWPLRFVIIHKRCIYYFKSSTSASPQGAFSLSGYNRVMRAAEETTSNNVFPFKIIHISKKHRTWFFSASSEDERKSWMAFVRREIGHFHEKKELPLDTSDSSSDTDSFYGAVERPIDISLSSYPMDNEDYEHEDEDDSYLEPDSPGPMKLEDALTYPPAYPPPPVPVPRKPAFSDLPRAHSFTSKSPSPLLPPPPPKRGLPDTGSAPEDAKDALGLRRVEPGLRVPATPRRMSDPPMSNVPTVPNLRKHPCFRDSVNPGLEPWTPGHGTSSVSSSTTMAVATSRNCDKLKSFHLSSRGPPTSEPPPVPANKPKFLKIAEEPSPREAAKFAPVPPVAPRPPVQKMPMPEATVRPAVLPRPENTPLPHLQRSPPDGQSFRGFSFEKARQPSQADTGEEDSDEDYEKVPLPNSVFVNTTESCEVERLFKATDPRGEPQDGLYCIRNSSTKSGKVLVVWDESSNKVRNYRIFEKDSKFYLEGEVLFASVGSMVEHYHTHVLPSHQSLLLRHPYGYAGPR.

The PH domain maps to 26–130 (GVAKAGYLHK…WMAFVRREIG (105 aa)). The interval 164–449 (LSSYPMDNED…EDSDEDYEKV (286 aa)) is disordered. Over residues 170-184 (DNEDYEHEDEDDSYL) the composition is skewed to acidic residues. Phosphotyrosine; by SYK occurs at positions 174 and 183. Positions 201 to 210 (PPAYPPPPVP) match the SH3-binding motif. 2 stretches are compositionally biased toward pro residues: residues 202–213 (PAYPPPPVPVPR) and 233–242 (PLLPPPPPKR). Residues 252-265 (EDAKDALGLRRVEP) show a composition bias toward basic and acidic residues. Residue Ser-277 is modified to Phosphoserine. Over residues 313 to 327 (TSSVSSSTTMAVATS) the composition is skewed to low complexity. The segment covering 360 to 371 (KIAEEPSPREAA) has biased composition (basic and acidic residues). Over residues 375 to 386 (PVPPVAPRPPVQ) the composition is skewed to pro residues. 2 positions are modified to phosphoserine: Ser-414 and Ser-425. Over residues 437–446 (TGEEDSDEDY) the composition is skewed to acidic residues. A Phosphotyrosine; by SYK modification is found at Tyr-446. The SH2 domain occupies 455–553 (VFVNTTESCE…HQSLLLRHPY (99 aa)).

Phosphorylated. Phosphorylation at Tyr-446 may stimulate the activity of the LYN kinase.

Its function is as follows. Binds differentially to the SH3 domains of certain proteins of signal transduction pathways. Binds to phosphatidylinositols; linking the hemopoietic tyrosine kinase fes to the cytoplasmic membrane in a phosphorylation dependent mechanism. This chain is SH3 domain-binding protein 2 (Sh3bp2), found in Mus musculus (Mouse).